Here is a 406-residue protein sequence, read N- to C-terminus: Olfactomedin-like protein 3 (406 aa).

The N-terminal stretch at 1-21 (MGPSTPLLILFLLSWSGPLQG) is a signal peptide. The stretch at 25 to 101 (HLVEYMERRL…REVDYLETQN (77 aa)) forms a coiled coil. The 268-residue stretch at 134–401 (DCGYTISQVR…QIVYKLEMRK (268 aa)) folds into the Olfactomedin-like domain. Cysteine 135 and cysteine 328 are disulfide-bonded. N-linked (GlcNAc...) asparagine glycosylation is found at asparagine 177 and asparagine 248.

It belongs to the OLFML3 family. Abundant in placenta, moderate in liver and heart, whereas fairly weak in other tissues examined. On term placenta, mainly localized extracellularly surrounding the syncytiotrophoblastic cells and very rarely expressed in the maternal decidua layer.

Its subcellular location is the secreted. Secreted scaffold protein that plays an essential role in dorsoventral patterning during early development. Stabilizes axial formation by restricting chordin (CHRD) activity on the dorsal side. Acts by facilitating the association between the tolloid proteases and their substrate chordin (CHRD), leading to enhance chordin (CHRD) degradation. May have matrix-related function involved in placental and embryonic development, or play a similar role in other physiological processes. In Homo sapiens (Human), this protein is Olfactomedin-like protein 3 (OLFML3).